A 500-amino-acid polypeptide reads, in one-letter code: NAD(P)H-quinone oxidoreductase chain 4, chloroplastic (500 aa).

Transmembrane regions (helical) follow at residues 4-24 (FPWLTIFVGLPISAGFLIFVF), 35-55 (YTIFICVLELLLMTYAFSYYF), 84-104 (GLSLGPILLTGFITTLATLAA), 113-133 (LFHFLMLAMYSGQIGLFSSQN), 134-154 (LLLFFIMWELELIPVYLLLAM), 167-187 (FILYTAGSSVFLLMGALGIAF), 211-231 (ILFYIGFLIAFAVKSPIIPLH), 242-262 (HYSTCMLLAGILLKMGAYGLV), 272-292 (AHSIFSSWLIIVGAIQIIYAA), 305-325 (IAYSSVSHMGFTIIGICSISD), 330-350 (GAILQIISHGFIGAALFFLSG), 386-406 (LALPGMSGFFAELVVFFGIIT), 416-436 (ILITFVTAVGTILTPIYLLSM), and 463-483 (FVSIAILLPVISIGIYPDFVF).

The protein belongs to the complex I subunit 4 family.

Its subcellular location is the plastid. It localises to the chloroplast thylakoid membrane. The catalysed reaction is a plastoquinone + NADH + (n+1) H(+)(in) = a plastoquinol + NAD(+) + n H(+)(out). It carries out the reaction a plastoquinone + NADPH + (n+1) H(+)(in) = a plastoquinol + NADP(+) + n H(+)(out). The sequence is that of NAD(P)H-quinone oxidoreductase chain 4, chloroplastic from Populus trichocarpa (Western balsam poplar).